The following is a 336-amino-acid chain: Holliday junction branch migration complex subunit RuvB (336 aa).

The tract at residues 1 to 182 (MKERIVNLET…FGMSFRMQFY (182 aa)) is large ATPase domain (RuvB-L). Residues L21, R22, G63, K66, T67, S68, 129 to 131 (EDF), R172, Y182, and R219 contribute to the ATP site. T67 serves as a coordination point for Mg(2+). The small ATPAse domain (RuvB-S) stretch occupies residues 183-253 (SPSELSLIIK…ITLHALNELG (71 aa)). Residues 256–336 (ELGFDEADLA…IPTLNPQTLF (81 aa)) form a head domain (RuvB-H) region. DNA contacts are provided by R310 and R315.

This sequence belongs to the RuvB family. In terms of assembly, homohexamer. Forms an RuvA(8)-RuvB(12)-Holliday junction (HJ) complex. HJ DNA is sandwiched between 2 RuvA tetramers; dsDNA enters through RuvA and exits via RuvB. An RuvB hexamer assembles on each DNA strand where it exits the tetramer. Each RuvB hexamer is contacted by two RuvA subunits (via domain III) on 2 adjacent RuvB subunits; this complex drives branch migration. In the full resolvosome a probable DNA-RuvA(4)-RuvB(12)-RuvC(2) complex forms which resolves the HJ.

The protein localises to the cytoplasm. It carries out the reaction ATP + H2O = ADP + phosphate + H(+). In terms of biological role, the RuvA-RuvB-RuvC complex processes Holliday junction (HJ) DNA during genetic recombination and DNA repair, while the RuvA-RuvB complex plays an important role in the rescue of blocked DNA replication forks via replication fork reversal (RFR). RuvA specifically binds to HJ cruciform DNA, conferring on it an open structure. The RuvB hexamer acts as an ATP-dependent pump, pulling dsDNA into and through the RuvAB complex. RuvB forms 2 homohexamers on either side of HJ DNA bound by 1 or 2 RuvA tetramers; 4 subunits per hexamer contact DNA at a time. Coordinated motions by a converter formed by DNA-disengaged RuvB subunits stimulates ATP hydrolysis and nucleotide exchange. Immobilization of the converter enables RuvB to convert the ATP-contained energy into a lever motion, pulling 2 nucleotides of DNA out of the RuvA tetramer per ATP hydrolyzed, thus driving DNA branch migration. The RuvB motors rotate together with the DNA substrate, which together with the progressing nucleotide cycle form the mechanistic basis for DNA recombination by continuous HJ branch migration. Branch migration allows RuvC to scan DNA until it finds its consensus sequence, where it cleaves and resolves cruciform DNA. The protein is Holliday junction branch migration complex subunit RuvB of Helicobacter pylori (strain P12).